Here is a 770-residue protein sequence, read N- to C-terminus: MRVCVTGFNVDAVRAVAIEETVSQVTGVHAVHAYPRTASVVIWYSPELGDTAAVLSAITKAQHVPAELVPARAPHSAGVRGVGVVRKITGGIRRMLSRPPGVDKPLKASRCGGRPRGPVRGSASWPGEQNRRERRTWLPRVWLALPLGLLALGSSMFFGAYPWAGWLAFAATLPVQFVAGWPILRGAVQQARALTSNMDTLIALGTLTAFVYSTYQLFAGGPLFFDTSALIIAFVVLGRHLEARATGKASEAISKLLELGAKEATLLVDGQELLVPVDQVQVGDLVRVRPGEKIPVDGEVTDGRAAVDESMLTGESVPVEKTAGDRVAGATVNLDGLLTVRATAVGADTALAQIVRLVEQAQGDKAPVQRLADRVSAVFVPAVIGVAVATFAGWTLIAANPVAGMTAAVAVLIIACPCALGLATPTAIMVGTGRGAELGILVKGGEVLEASKKIDTVVFDKTGTLTRARMRVTDVIAGQRRQPDQVLRLAAAVESGSEHPIGAAIVAAAHERGLAIPAANAFTAVAGHGVRAQVNGGPVVVGRRKLVDEQHLVLPDHLAAAAVEQEERGRTAVFVGQDGQVVGVLAVADTVKDDAADVVGRLHAMGLQVAMITGDNARTAAAIAKQVGIEKVLAEVLPQDKVAEVRRLQDQGRVVAMVGDGVNDAPALVQADLGIAIGTGTDVAIEASDITLMSGRLDGVVRAIELSRQTLRTIYQNLGWAFGYNTAAIPLAALGALNPVVAGAAMGFSSVSVVTNSLRLRRFGRDGRTA.

Residues 1 to 66 (MRVCVTGFNV…AITKAQHVPA (66 aa)) form the HMA domain. The segment at 103 to 130 (DKPLKASRCGGRPRGPVRGSASWPGEQN) is disordered. Positions 110-121 (RCGGRPRGPVRG) are enriched in low complexity. Transmembrane regions (helical) follow at residues 141-161 (VWLA…FGAY), 164-184 (AGWL…WPIL), 193-213 (ALTS…FVYS), 217-237 (LFAG…FVVL), 377-397 (AVFV…WTLI), and 402-422 (VAGM…ALGL). Asp-460 functions as the 4-aspartylphosphate intermediate in the catalytic mechanism. Residues Asp-660 and Asp-664 each contribute to the Mg(2+) site. 2 helical membrane-spanning segments follow: residues 718–737 (LGWA…LGAL) and 741–760 (VAGA…SLRL).

This sequence belongs to the cation transport ATPase (P-type) (TC 3.A.3) family. Type IB subfamily.

The protein localises to the cell membrane. The enzyme catalyses Cu(+)(in) + ATP + H2O = Cu(+)(out) + ADP + phosphate + H(+). Its function is as follows. Necessary for copper homeostasis and likely functions as a copper exporter. Also required for full virulence. The chain is Probable copper-exporting P-type ATPase V (ctpV) from Mycobacterium tuberculosis (strain CDC 1551 / Oshkosh).